The sequence spans 2409 residues: Reducing polyketide synthase FUB1 (2409 aa).

The segment covering 1-43 (MTLSNGSNGANGTSNGHGAHPSANGFHNAANGGANNGTPNGGA) has biased composition (low complexity). The disordered stretch occupies residues 1–49 (MTLSNGSNGANGTSNGHGAHPSANGFHNAANGGANNGTPNGGAEYNASL). The region spanning 57 to 479 (SSAIAVIGVS…GANAHAVLDD (423 aa)) is the Ketosynthase family 3 (KS3) domain. Catalysis depends on for beta-ketoacyl synthase activity residues cysteine 230, histidine 365, and histidine 403. The segment at 608 to 929 (TFIFTGQGAQ…FSAIKRKQDA (322 aa)) is malonyl-CoA:ACP transacylase (MAT) domain. The active-site For malonyltransferase activity is serine 699. The N-terminal hotdog fold stretch occupies residues 994–1127 (LELLGVRDPR…GLVSTSYKRE (134 aa)). The region spanning 994-1307 (LELLGVRDPR…TVPLRGASDP (314 aa)) is the PKS/mFAS DH domain. The segment at 995–1302 (ELLGVRDPRS…LEGCKTVPLR (308 aa)) is dehydratase (DH) domain. The active-site Proton acceptor; for dehydratase activity is histidine 1026. The C-terminal hotdog fold stretch occupies residues 1155–1307 (LPSVDPTVFY…TVPLRGASDP (153 aa)). Aspartate 1220 functions as the Proton donor; for dehydratase activity in the catalytic mechanism. Residues 1713–2025 (GLLDTLEYLS…SGGHVGKIVL (313 aa)) are enoyl reductase (ER) domain. The tract at residues 2049 to 2225 (ATYVLIGGLG…AATSINLSLV (177 aa)) is ketoreductase (KR) domain. One can recognise a Carrier domain in the interval 2328–2405 (EVYEIVLQQL…GFAKKVMAKS (78 aa)). Serine 2365 is subject to O-(pantetheine 4'-phosphoryl)serine.

It participates in mycotoxin biosynthesis. Reducing polyketide synthase; part of the gene cluster that mediates the biosynthesis of fusaric acid, a mycotoxin with low to moderate toxicity to animals and humans, but with high phytotoxic properties. L-aspartate is suggested as fusaric acid amino acid precursor that is activated and further processed to O-acetyl-L-homoserine by cluster enzymes aspartate kinase FUB3 and homoserine O-acetyltransferase FUB5, as well as enzymes of the primary metabolism. The polyketide synthase (PKS) FUB1 generates the triketide trans-2-hexenal which is presumptively released by the hydrolase FUB4 and linked to the NRPS-bound amino acid precursor by NAD(P)-dependent dehydrogenase FUB6. FUB1, FUB4, and the non-canonical NRPS Fub8 may form an enzyme complex. Further processing of the NRPS-bound intermediate might be carried out by FUB6 and the sulfhydrylase FUB7, enabling a spontaneous electrocyclization to close the carbon backbone of fusaric acid. Dihydrofusaric acid is likely to be released via reduction by the thioester reductase (TR) domain of FUB8 whereupon the final oxidation to fusaric acid may (also) be performed by the FMN-dependent dehydrogenase FUB9. This Gibberella moniliformis (strain M3125 / FGSC 7600) (Maize ear and stalk rot fungus) protein is Reducing polyketide synthase FUB1.